Reading from the N-terminus, the 211-residue chain is Large ribosomal subunit protein uL4 (211 aa).

The span at 41-53 (QAHSRQGTASTLT) shows a compositional bias: polar residues. The segment at 41-78 (QAHSRQGTASTLTRAEVRGGGRKPYKQKGTGRARQGTI) is disordered. Residues 60-71 (GGRKPYKQKGTG) are compositionally biased toward basic residues.

It belongs to the universal ribosomal protein uL4 family. As to quaternary structure, part of the 50S ribosomal subunit.

In terms of biological role, one of the primary rRNA binding proteins, this protein initially binds near the 5'-end of the 23S rRNA. It is important during the early stages of 50S assembly. It makes multiple contacts with different domains of the 23S rRNA in the assembled 50S subunit and ribosome. Functionally, forms part of the polypeptide exit tunnel. This Prochlorococcus marinus (strain MIT 9313) protein is Large ribosomal subunit protein uL4.